Here is a 1052-residue protein sequence, read N- to C-terminus: Membrane-bound transcription factor site-1 protease (1052 aa).

Positions 1 to 17 (MKLVSTWLLVLVVLLCG) are cleaved as a signal peptide. Residues 18–186 (KRHLGDRLGT…TGRHSSRRLL (169 aa)) constitute a propeptide that is removed on maturation. Residue N148 is glycosylated (N-linked (GlcNAc...) asparagine). S168 carries the phosphoserine modification. Residues 187–999 (RAIPRQVAQT…MPGRYNQEVG (813 aa)) lie on the Lumenal side of the membrane. A Peptidase S8 domain is found at 190 to 472 (PRQVAQTLQA…HGKLDLLRAY (283 aa)). The Charge relay system role is filled by D218. N236 carries N-linked (GlcNAc...) asparagine glycosylation. H249 functions as the Charge relay system in the catalytic mechanism. N-linked (GlcNAc...) asparagine glycosylation occurs at N305. S414 functions as the Charge relay system in the catalytic mechanism. Residues N515 and N728 are each glycosylated (N-linked (GlcNAc...) asparagine). A compositionally biased stretch (polar residues) spans 877–887 (PSLSHSGNRQR). The interval 877-900 (PSLSHSGNRQRPPSGAGLAPPERM) is disordered. N939 is a glycosylation site (N-linked (GlcNAc...) asparagine). The chain crosses the membrane as a helical span at residues 1000–1022 (QTIPVFAFLGAMVALAFFVVQIS). Over 1023-1052 (KAKSRPKRRRPRAKRPQLAQQAHPARTPSV) the chain is Cytoplasmic. The span at 1026 to 1037 (SRPKRRRPRAKR) shows a compositional bias: basic residues. The segment at 1026-1052 (SRPKRRRPRAKRPQLAQQAHPARTPSV) is disordered.

It belongs to the peptidase S8 family. In terms of assembly, interacts with LYSET; this interaction bridges GNPTAB to MBTPS1. Ca(2+) is required as a cofactor. In terms of processing, the 148 kDa zymogen is processed progressively into two membrane-bound 120 and 106 kDa forms in the endoplasmic reticulum, and late into a secreted 98 kDa form. The propeptide is autocatalytically removed through an intramolecular cleavage after Leu-186. Further cleavage generates 14, 10, and 8 kDa intermediates.

It localises to the endoplasmic reticulum membrane. The protein resides in the golgi apparatus membrane. It catalyses the reaction Processes precursors containing basic and hydrophobic/aliphatic residues at P4 and P2, respectively, with a relatively relaxed acceptance of amino acids at P1 and P3.. Inhibited by divalent copper and zinc ions, but not by nickel or cobalt. Inhibited by its prosegment, but not smaller fragments. Inhibited by 4-(2-aminoethyl)benzenesulfonyl fluoride (AEBSF), a serine protease inhibitor. Functionally, serine protease that cleaves after hydrophobic or small residues, provided that Arg or Lys is in position P4: known substrates include SREBF1/SREBP1, SREBF2/SREBP2, BDNF, GNPTAB, ATF6, ATF6B and FAM20C. Cleaves substrates after Arg-Ser-Val-Leu (SREBP2), Arg-His-Leu-Leu (ATF6), Arg-Gly-Leu-Thr (BDNF) and its own propeptide after Arg-Arg-Leu-Leu. Catalyzes the first step regulated intramembrane proteolysis activation of the sterol regulatory element-binding proteins (SREBPs) SREBF1/SREBP1 and SREBF2/SREBP2. Also mediates the first step of the regulated intramembrane proteolytic activation of the cyclic AMP-dependent transcription factor ATF-6 (ATF6 and ATF6B). Mediates the protein cleavage of GNPTAB into subunit alpha and beta, thereby participating in biogenesis of lysosomes. Cleaves the propeptide from FAM20C which is required for FAM20C secretion from the Golgi apparatus membrane and for enhancement of FAM20C kinase activity, promoting osteoblast differentiation and biomineralization. Involved in the regulation of M6P-dependent Golgi-to-lysosome trafficking of lysosomal enzymes. It is required for the activation of CREB3L2/BBF2H7, a transcriptional activator of MIA3/TANGO and other genes controlling mega vesicle formation. Therefore, it plays a key role in the regulation of mega vesicle-mediated collagen trafficking. In astrocytes and osteoblasts, upon DNA damage and ER stress, mediates the first step of the regulated intramembrane proteolytic activation of the transcription factor CREB3L1, leading to the inhibition of cell-cycle progression. This is Membrane-bound transcription factor site-1 protease (Mbtps1) from Mus musculus (Mouse).